We begin with the raw amino-acid sequence, 353 residues long: MPQKVRIALDAMGGDFGPSVVIPGAAIALGRHPDAEFLLFGDSALIDKELAAHPALKKVSRVVHTDVAVSMHDKPSQALRRGRKVSSMWLAIEAVKKGEADVAVSAGNTGALMAMARFCLRTLPGIDRPAIAATWPTVRGDSVVLDLGATIGGDAAHLKALAVMGAAMASVLFDLERPTVGLLNIGVEEIKGGEEIREAAELLRAMQSPPFEFIGFVEGDGIGSGAADVIVSEGFSGNIALKAAEGTARQIIQLLRDAMSRTWSAKIGYLFARGAFRALRDKIDPNKSNGGVFLGLNGIVVKSHGGTNADGFAYAVDVSYDMVRYDLLTKINQTLNRETGALVSTPSAQEAVS.

This sequence belongs to the PlsX family. Homodimer. Probably interacts with PlsY.

It localises to the cytoplasm. It catalyses the reaction a fatty acyl-[ACP] + phosphate = an acyl phosphate + holo-[ACP]. It participates in lipid metabolism; phospholipid metabolism. Functionally, catalyzes the reversible formation of acyl-phosphate (acyl-PO(4)) from acyl-[acyl-carrier-protein] (acyl-ACP). This enzyme utilizes acyl-ACP as fatty acyl donor, but not acyl-CoA. The chain is Phosphate acyltransferase from Rhodopseudomonas palustris (strain BisB5).